Here is a 1003-residue protein sequence, read N- to C-terminus: Cytosolic carboxypeptidase 3 (1003 aa).

A disordered region spans residues 1 to 23 (MSEDSEKEDYSDRTISDEDESDE). In terms of domain architecture, Peptidase M14 spans 299–570 (YPYTYTNLQE…HFCDSLLDYC (272 aa)). Histidine 364, glutamate 367, and histidine 460 together coordinate Zn(2+). Glutamate 534 functions as the Proton donor/acceptor in the catalytic mechanism. Disordered stretches follow at residues 642–662 (KQLK…NIRE) and 911–1003 (KSSE…QRDT). Residues 649–662 (ERNSTIERHQNIRE) are compositionally biased toward basic and acidic residues. Positions 922 to 934 (PKKRRKYSRVKAT) are enriched in basic residues. Residues 963 to 976 (AEGSSQQGTMQTAP) show a composition bias toward polar residues.

It belongs to the peptidase M14 family. Zn(2+) serves as cofactor.

The protein resides in the cytoplasm. The protein localises to the cytosol. The enzyme catalyses (L-glutamyl)(n+1)-gamma-L-glutamyl-L-glutamyl-[protein] + H2O = (L-glutamyl)(n)-gamma-L-glutamyl-L-glutamyl-[protein] + L-glutamate. Its function is as follows. Metallocarboxypeptidase that mediates deglutamylation of tubulin and non-tubulin target proteins. Catalyzes the removal of polyglutamate side chains present on the gamma-carboxyl group of glutamate residues within the C-terminal tail of tubulin protein. Specifically cleaves tubulin long-side-chains, while it is not able to remove the branching point glutamate. Also catalyzes the removal of polyglutamate residues from the carboxy-terminus of non-tubulin proteins such as MYLK. May catalyze the hydrolysis of aspartate from the carboxy-terminus of target proteins. Does not show detyrosinase or deglycylase activities from the carboxy-terminus of target proteins. The protein is Cytosolic carboxypeptidase 3 (AGBL3) of Bos taurus (Bovine).